The primary structure comprises 312 residues: DNA-directed RNA polymerase subunit alpha (312 aa).

The interval Met1 to Asp226 is alpha N-terminal domain (alpha-NTD). The tract at residues Lys243–Asp312 is alpha C-terminal domain (alpha-CTD).

The protein belongs to the RNA polymerase alpha chain family. As to quaternary structure, homodimer. The RNAP catalytic core consists of 2 alpha, 1 beta, 1 beta' and 1 omega subunit. When a sigma factor is associated with the core the holoenzyme is formed, which can initiate transcription.

It catalyses the reaction RNA(n) + a ribonucleoside 5'-triphosphate = RNA(n+1) + diphosphate. In terms of biological role, DNA-dependent RNA polymerase catalyzes the transcription of DNA into RNA using the four ribonucleoside triphosphates as substrates. The chain is DNA-directed RNA polymerase subunit alpha from Lactobacillus delbrueckii subsp. bulgaricus (strain ATCC 11842 / DSM 20081 / BCRC 10696 / JCM 1002 / NBRC 13953 / NCIMB 11778 / NCTC 12712 / WDCM 00102 / Lb 14).